The chain runs to 91 residues: Probable Fe(2+)-trafficking protein (91 aa).

It belongs to the Fe(2+)-trafficking protein family.

In terms of biological role, could be a mediator in iron transactions between iron acquisition and iron-requiring processes, such as synthesis and/or repair of Fe-S clusters in biosynthetic enzymes. The protein is Probable Fe(2+)-trafficking protein of Ralstonia pickettii (strain 12J).